Here is a 439-residue protein sequence, read N- to C-terminus: MIRLFEWLTQESLDLHYSLEESGIHGTSIVLNDDGFLPEGIISPYTFFCEVEMDGSPLYFNQLEVPYLWQITGTNIEGEIWNRSSKRGVIHYHEPKYLRFVQSVDWLYPDGSIYMTDHYNKYGWAFARTYFFSDQQVSHKKYYTKSGQEVLSENILTGDILLNWKGKVYHFTKKVDFFLFYFKKSGLDLSSIWYNSLGMPFLISYYLGGEGRDILFWQENLADQLPGNMQIIFSGRTSRTKKVIVQDRSVYKKLLHLVEEKNKEMISFLNIIYPKLRENYSRKEILIVTNSDQIEGIETLTDNLSAYTFHIGALTSMSDKLQNIGQKENVLLYPNMSPKTMLDLLEQCDIYLDINHGNEVLSIVRLAFERSLLILAYDNTVHSPIFHHESGIFNHSKPQTLSDWLLNLDDYSQTVSCWRSDLFPMTYRDYKQVLVSNVD.

Belongs to the GtfB family. As to quaternary structure, interacts with glycosyltransferase GtfA (Gtf2); probably forms a heterotetramer with 2 subunits each of GtfA and GtfB. Part of the accessory SecA2/SecY2 protein translocation apparatus.

The protein localises to the cell membrane. The protein operates within protein modification; protein glycosylation. Its function is as follows. Required for the polymorphic O-glycosylation of the serine-rich repeat protein Fap1. A stabilizing protein that is part of the accessory SecA2/SecY2 system specifically required to export Fap1, a serine-rich fimbrial adhesin encoded upstream in the same operon. The GtfA-GtfB (Gtf1-Gtf2 in this bacteria) complex adds GlcNAc from UDP-GlcNAc to Fap1, attaching the first sugar residue. Cannot use not UDP-Glc as substrate. Stabilizes the glycosylation activity of GtfA, causing it to partially localize to the cellular membrane where it is more protease resistant. This chain is UDP-N-acetylglucosamine--peptide N-acetylglucosaminyltransferase stabilizing protein GtfB, found in Streptococcus parasanguinis.